A 956-amino-acid chain; its full sequence is Endogenous retrovirus group K member 6 Pol protein (956 aa).

One can recognise a Reverse transcriptase domain in the interval 57–245; sequence LEKGHIEPSF…TPFHYLGMQI (189 aa). Positions 161–164 match the LPQG motif; the sequence is LPQG. Residues 195–198 carry the YXDD motif; that stretch reads CIDD. The RNase H type-1 domain maps to 460-590; it reads LENALTVFTD…ADLLVSSALI (131 aa). D469, E497, D517, and D582 together coordinate Mg(2+). The Integrase-type zinc finger occupies 587-628; the sequence is SALIKAQELHALTHVNAAGLKNKFDVTWKQAKDIVQHCTQCQ. H596, H600, C624, and C627 together coordinate Zn(2+). The Integrase catalytic domain maps to 642–803; it reads RGLCPNALWQ…TSAEQHLTGK (162 aa). Residues 811–859 constitute a DNA-binding region (integrase-type); the sequence is KLIWWKDNKNKTWEIGKVITWGRGFACVSPGENQLPVWIPTRHLKFYNE. The segment at 865–890 is disordered; it reads KKSTSAETETSQSSTVDSQDEQNGDV. Over residues 869–879 the composition is skewed to low complexity; that stretch reads SAETETSQSST.

It belongs to the beta type-B retroviral polymerase family. HERV class-II K(HML-2) pol subfamily. In terms of processing, cleavage sites that yield the mature proteins remain to be determined.

It catalyses the reaction DNA(n) + a 2'-deoxyribonucleoside 5'-triphosphate = DNA(n+1) + diphosphate. It carries out the reaction Endonucleolytic cleavage to 5'-phosphomonoester.. In terms of biological role, early post-infection, the reverse transcriptase converts the viral RNA genome into double-stranded viral DNA. The RNase H domain of the reverse transcriptase performs two functions. It degrades the RNA template and specifically removes the RNA primer from the RNA/DNA hybrid. Following nuclear import, the integrase catalyzes the insertion of the linear, double-stranded viral DNA into the host cell chromosome. Endogenous Pol proteins may have kept, lost or modified their original function during evolution. The polypeptide is Endogenous retrovirus group K member 6 Pol protein (ERVK-6) (Homo sapiens (Human)).